Reading from the N-terminus, the 282-residue chain is PTS system sorbose-specific EIID component (282 aa).

The region spanning 13 to 281 (TKITKGDMFK…GIVGYWLGIL (269 aa)) is the PTS EIID domain. The next 4 membrane-spanning stretches (helical) occupy residues 135–155 (LGAS…FVAF), 197–217 (GLFI…PLVV), 234–254 (ILDQ…CMYL), and 261–281 (PILL…LGIL).

Its subcellular location is the cell membrane. In terms of biological role, the phosphoenolpyruvate-dependent sugar phosphotransferase system (PTS), a major carbohydrate active transport system, catalyzes the phosphorylation of incoming sugar substrates concomitant with their translocation across the cell membrane. The enzyme II SorABCD PTS system is involved in L-sorbose transport. The protein is PTS system sorbose-specific EIID component of Lacticaseibacillus casei (Lactobacillus casei).